An 81-amino-acid chain; its full sequence is Penaeidin-3c (81 aa).

An N-terminal signal peptide occupies residues 1–19 (MRLVVCLVFLASFALVCQG). Glutamine 20 bears the Pyrrolidone carboxylic acid mark. Intrachain disulfides connect cysteine 50-cysteine 65, cysteine 54-cysteine 72, and cysteine 66-cysteine 73. The residue at position 80 (serine 80) is a Serine amide.

This sequence belongs to the penaeidin family. Higher expression in hemocytes and to a lesser extent in heart, testis, gills, intestine, lymphoid organ and hepatopancreas. Traces in eyes and subcuticular epithelium. Not present in the brain.

Its subcellular location is the cytoplasmic granule. In terms of biological role, antibacterial activity against M.luteus and E.coli bacteria. Antifungal activity against N.crassa and F.oxysporum. Presents chitin-binding activity. The sequence is that of Penaeidin-3c from Penaeus vannamei (Whiteleg shrimp).